Consider the following 693-residue polypeptide: Polyribonucleotide nucleotidyltransferase (693 aa).

Positions 490 and 496 each coordinate Mg(2+). The KH domain maps to 557–617 (PRISWFFIDP…EKVQEAVEYI (61 aa)). Residues 627–691 (GDLYTGKVTR…DAGRLQFRRL (65 aa)) enclose the S1 motif domain.

Belongs to the polyribonucleotide nucleotidyltransferase family. The cofactor is Mg(2+).

Its subcellular location is the cytoplasm. The enzyme catalyses RNA(n+1) + phosphate = RNA(n) + a ribonucleoside 5'-diphosphate. Involved in mRNA degradation. Catalyzes the phosphorolysis of single-stranded polyribonucleotides processively in the 3'- to 5'-direction. The protein is Polyribonucleotide nucleotidyltransferase of Fervidobacterium nodosum (strain ATCC 35602 / DSM 5306 / Rt17-B1).